Here is a 270-residue protein sequence, read N- to C-terminus: Putative pyruvate, phosphate dikinase regulatory protein (270 aa).

Position 148–155 (148–155 (GVSRTSKT)) interacts with ADP.

Belongs to the pyruvate, phosphate/water dikinase regulatory protein family. PDRP subfamily.

It catalyses the reaction N(tele)-phospho-L-histidyl/L-threonyl-[pyruvate, phosphate dikinase] + ADP = N(tele)-phospho-L-histidyl/O-phospho-L-threonyl-[pyruvate, phosphate dikinase] + AMP + H(+). The enzyme catalyses N(tele)-phospho-L-histidyl/O-phospho-L-threonyl-[pyruvate, phosphate dikinase] + phosphate + H(+) = N(tele)-phospho-L-histidyl/L-threonyl-[pyruvate, phosphate dikinase] + diphosphate. In terms of biological role, bifunctional serine/threonine kinase and phosphorylase involved in the regulation of the pyruvate, phosphate dikinase (PPDK) by catalyzing its phosphorylation/dephosphorylation. This is Putative pyruvate, phosphate dikinase regulatory protein from Bacillus cytotoxicus (strain DSM 22905 / CIP 110041 / 391-98 / NVH 391-98).